The primary structure comprises 221 residues: N-acetyltransferase 8F1 (221 aa).

The helical transmembrane segment at 53–73 (LVLVSGSWLLAVVCIFFLLLL) threads the bilayer. An N-acetyltransferase domain is found at 69-219 (FLLLLLRFLA…RTIQLKYPFP (151 aa)).

This sequence belongs to the camello family.

Its subcellular location is the membrane. In terms of biological role, may play a role in regulation of gastrulation. This is N-acetyltransferase 8F1 from Rattus norvegicus (Rat).